A 468-amino-acid polypeptide reads, in one-letter code: ERO1-like protein alpha (468 aa).

Residues 1–23 (MGRGWGFLFGLLGAVWLLSSGHG) form the signal peptide. 8 cysteine pairs are disulfide-bonded: Cys35–Cys48, Cys37–Cys46, Cys85–Cys391, Cys94–Cys99, Cys94–Cys131, Cys99–Cys104, Cys208–Cys241, and Cys394–Cys397. Phosphoserine is present on residues Ser106 and Ser143. Ser145 is subject to Phosphoserine; by FAM20C. Residues Arg187, Thr189, and Trp200 each coordinate FAD. Positions 252 and 255 each coordinate FAD. The N-linked (GlcNAc...) asparagine glycan is linked to Asn280. Positions 287 and 300 each coordinate FAD. Asn384 carries N-linked (GlcNAc...) asparagine glycosylation.

It belongs to the EROs family. As to quaternary structure, predominantly monomer. May function both as a monomer and a homodimer. Interacts with PDILT. Interacts with ERP44; the interaction results in retention of ERO1A in the endoplasmic reticulum. FAD serves as cofactor. Post-translationally, N-glycosylated. The Cys-94/Cys-99 and Cys-394/Cys-397 disulfide bonds constitute the redox-active center. The Cys-94/Cys-99 disulfide bond may accept electron from P4HB and funnel them to the active site disulfide Cys-394/Cys-397. The regulatory Cys-99/Cys-104 disulfide bond stabilizes the other regulatory bond Cys-94/Cys-131. In terms of processing, phosphorylated on Ser-145 by FAM20C in the Golgi which increases its enzymatic activity. Phosphorylation is induced by lactation. It is also induced by hypoxia and reductive stress. Widely expressed at low level. Expressed at high level in upper digestive tract. Highly expressed in esophagus. Weakly expressed in stomach and duodenum.

It localises to the endoplasmic reticulum membrane. The protein resides in the golgi apparatus lumen. Its subcellular location is the secreted. The protein localises to the cell projection. It is found in the dendrite. Its activity is regulated as follows. Enzyme activity is tightly regulated to prevent the accumulation of reactive oxygen species in the endoplasmic reticulum. Reversibly down-regulated by the formation of disulfide bonds between the active site Cys-94 and Cys-131, and between Cys-99 and Cys-104. Glutathione may be required to regulate its activity in the endoplasmic reticulum. Its function is as follows. Oxidoreductase involved in disulfide bond formation in the endoplasmic reticulum. Efficiently reoxidizes P4HB/PDI, the enzyme catalyzing protein disulfide formation, in order to allow P4HB to sustain additional rounds of disulfide formation. Following P4HB reoxidation, passes its electrons to molecular oxygen via FAD, leading to the production of reactive oxygen species (ROS) in the cell. Required for the proper folding of immunoglobulins. Plays an important role in ER stress-induced, CHOP-dependent apoptosis by activating the inositol 1,4,5-trisphosphate receptor IP3R1. Involved in the release of the unfolded cholera toxin from reduced P4HB/PDI in case of infection by V.cholerae, thereby playing a role in retrotranslocation of the toxin. This is ERO1-like protein alpha from Homo sapiens (Human).